Consider the following 147-residue polypeptide: RxLR effector protein Avr3a (147 aa).

An N-terminal signal peptide occupies residues 1-21 (MRLAIMLSATAVAINFATSSA). The short motif at 44 to 59 (RLLRKNEENEETSEER) is the RxLR-dEER element. Residue lysine 48 is modified to N6-acetyllysine. An effector domain region spans residues 77–147 (ALTERADAKK…YMMHLGLTGY (71 aa)).

The protein belongs to the RxLR effector family. In terms of assembly, forms homodimers via the RxLR-dEER motif. Interacts with host E3 ligase CMPG1. Interacts with host DRP2. In terms of processing, proteolytically cleaved. The cleavage site directly after the RxLR sequence and the high conservation among other effector proteins suggest that the RxLR motif might play a crucial role in the intracellular processing before secretion. Post-translationally, glycosylated. N-acetylated at Lys-48 after cleavage.

The protein localises to the secreted. The protein resides in the host cytoplasm. Multifunctional effector that can suppress host BAK1/SERK3-mediated immunity through at least two different pathways. Manipulates plant immunity by targeting and stabilizing host E3 ligase CMPG1. Preventing the normal 26S proteasome-dependent degradation of potato CMPG1, and thus potentially of its protein substrates in the host cell, further abolishes host cell death during the biotrophic phase of infection. Also associates with and affects the function of the dynamin-related protein 2 (DRP2), a plant GTPase involved in immune receptor-mediated endocytosis. The Avr3a(EM) form evades recognition by R3a, thus does not trigger R3a-mediated hypersensitivity and does not suppress INF1-induced cell death. This chain is RxLR effector protein Avr3a, found in Phytophthora infestans (Potato late blight agent).